The sequence spans 290 residues: Ribosomal protein L11 methyltransferase (290 aa).

S-adenosyl-L-methionine contacts are provided by threonine 136, glycine 157, aspartate 179, and asparagine 222.

Belongs to the methyltransferase superfamily. PrmA family.

Its subcellular location is the cytoplasm. It catalyses the reaction L-lysyl-[protein] + 3 S-adenosyl-L-methionine = N(6),N(6),N(6)-trimethyl-L-lysyl-[protein] + 3 S-adenosyl-L-homocysteine + 3 H(+). Its function is as follows. Methylates ribosomal protein L11. In Porphyromonas gingivalis (strain ATCC BAA-308 / W83), this protein is Ribosomal protein L11 methyltransferase.